Here is a 222-residue protein sequence, read N- to C-terminus: Protein-L-isoaspartate O-methyltransferase (222 aa).

Residue serine 69 is part of the active site.

This sequence belongs to the methyltransferase superfamily. L-isoaspartyl/D-aspartyl protein methyltransferase family.

The protein resides in the cytoplasm. It catalyses the reaction [protein]-L-isoaspartate + S-adenosyl-L-methionine = [protein]-L-isoaspartate alpha-methyl ester + S-adenosyl-L-homocysteine. In terms of biological role, catalyzes the methyl esterification of L-isoaspartyl residues in peptides and proteins that result from spontaneous decomposition of normal L-aspartyl and L-asparaginyl residues. It plays a role in the repair and/or degradation of damaged proteins. This chain is Protein-L-isoaspartate O-methyltransferase, found in Nitrosomonas eutropha (strain DSM 101675 / C91 / Nm57).